Consider the following 426-residue polypeptide: 3-phosphoshikimate 1-carboxyvinyltransferase (426 aa).

3-phosphoshikimate-binding residues include lysine 20, serine 21, and arginine 25. Lysine 20 is a phosphoenolpyruvate binding site. Glycine 92 and arginine 120 together coordinate phosphoenolpyruvate. The 3-phosphoshikimate site is built by serine 166, glutamine 168, aspartate 312, and lysine 339. Phosphoenolpyruvate is bound at residue glutamine 168. The Proton acceptor role is filled by aspartate 312. Arginine 385 is a binding site for phosphoenolpyruvate.

The protein belongs to the EPSP synthase family. In terms of assembly, monomer.

Its subcellular location is the cytoplasm. The enzyme catalyses 3-phosphoshikimate + phosphoenolpyruvate = 5-O-(1-carboxyvinyl)-3-phosphoshikimate + phosphate. It functions in the pathway metabolic intermediate biosynthesis; chorismate biosynthesis; chorismate from D-erythrose 4-phosphate and phosphoenolpyruvate: step 6/7. In terms of biological role, catalyzes the transfer of the enolpyruvyl moiety of phosphoenolpyruvate (PEP) to the 5-hydroxyl of shikimate-3-phosphate (S3P) to produce enolpyruvyl shikimate-3-phosphate and inorganic phosphate. The sequence is that of 3-phosphoshikimate 1-carboxyvinyltransferase from Streptococcus suis (strain 98HAH33).